Reading from the N-terminus, the 372-residue chain is Oxysterol-binding protein 3 (372 aa).

Over residues 1-10 the composition is skewed to basic and acidic residues; the sequence is MGKSDRKLTE. The disordered stretch occupies residues 1–25; it reads MGKSDRKLTEENSIENGVKPGKLTE.

This sequence belongs to the OSBP family.

The polypeptide is Oxysterol-binding protein 3 (osbC) (Dictyostelium discoideum (Social amoeba)).